The chain runs to 148 residues: Probable glycine cleavage system H protein 2 (148 aa).

The 83-residue stretch at 32–114 (TIVVGITDLA…YGKGWLVKMK (83 aa)) folds into the Lipoyl-binding domain. K73 is subject to N6-lipoyllysine.

This sequence belongs to the GcvH family. In terms of assembly, the glycine cleavage system is composed of four proteins: P, T, L and H. Requires (R)-lipoate as cofactor.

The glycine cleavage system catalyzes the degradation of glycine. The H protein shuttles the methylamine group of glycine from the P protein to the T protein. The chain is Probable glycine cleavage system H protein 2 from Saccharolobus solfataricus (strain ATCC 35092 / DSM 1617 / JCM 11322 / P2) (Sulfolobus solfataricus).